The sequence spans 364 residues: 3'(2'),5'-bisphosphate nucleotidase 1 (364 aa).

Residue D54 is the Proton acceptor of the active site. Mg(2+)-binding residues include E77, D141, I143, and D144. Catalysis depends on T146, which acts as the Proton acceptor. Residues T146, H243, S272, K275, R289, and D302 each contribute to the adenosine 3',5'-bisphosphate site. Residues H243, S272, K275, R289, and D302 each contribute to the AMP site. D302 lines the Mg(2+) pocket.

The protein belongs to the inositol monophosphatase superfamily. The cofactor is Mg(2+).

It catalyses the reaction 3'-phosphoadenylyl sulfate + H2O = adenosine 5'-phosphosulfate + phosphate. The catalysed reaction is adenosine 3',5'-bisphosphate + H2O = AMP + phosphate. It carries out the reaction adenosine 2',5'-bisphosphate + H2O = AMP + phosphate. In terms of biological role, phosphatase that converts adenosine 3'-phosphate 5'-phosphosulfate (PAPS) to adenosine 5'-phosphosulfate (APS) and 3'(2')-phosphoadenosine 5'-phosphate (PAP) to AMP. Regulates the flux of sulfur in the sulfur-activation pathway by converting PAPS to APS. Involved in salt tolerance. The polypeptide is 3'(2'),5'-bisphosphate nucleotidase 1 (HAL21) (Candida albicans (strain WO-1) (Yeast)).